Reading from the N-terminus, the 208-residue chain is 3-demethoxyubiquinol 3-hydroxylase (208 aa).

Fe cation-binding residues include Glu57, Glu87, His90, Glu139, Glu171, and His174.

It belongs to the COQ7 family. Requires Fe cation as cofactor.

The protein resides in the cell membrane. It carries out the reaction a 5-methoxy-2-methyl-3-(all-trans-polyprenyl)benzene-1,4-diol + AH2 + O2 = a 3-demethylubiquinol + A + H2O. The protein operates within cofactor biosynthesis; ubiquinone biosynthesis. Catalyzes the hydroxylation of 2-nonaprenyl-3-methyl-6-methoxy-1,4-benzoquinol during ubiquinone biosynthesis. In Herbaspirillum seropedicae, this protein is 3-demethoxyubiquinol 3-hydroxylase.